A 1162-amino-acid polypeptide reads, in one-letter code: Spike glycoprotein (1162 aa).

The N-terminal stretch at 1–18 (MLVTPLLLVTLLCALCSA) is a signal peptide. Topologically, residues 19 to 1095 (VLYDSSSYVY…LKTYIKWPWY (1077 aa)) are extracellular. N-linked (GlcNAc...) asparagine; by host glycosylation is found at asparagine 51, asparagine 77, asparagine 103, asparagine 144, asparagine 163, asparagine 178, asparagine 212, asparagine 237, asparagine 247, asparagine 264, asparagine 276, asparagine 306, asparagine 425, asparagine 447, asparagine 513, asparagine 530, asparagine 579, asparagine 591, asparagine 669, asparagine 676, and asparagine 714. Positions 769–874 (IPFATQLQAR…QVDRLITGRL (106 aa)) are heptad repeat 1 (HR1). A coiled-coil region spans residues 822–866 (QDVVSKQSAILTETMASLNKNFGAISSVIQEIYQQFDAIQANAQV). Residues asparagine 947, asparagine 960, asparagine 979, asparagine 1014, asparagine 1038, asparagine 1051, and asparagine 1074 are each glycosylated (N-linked (GlcNAc...) asparagine; by host). Residues 1024 to 1105 (NDDFDFNDEL…VWLAIAFATI (82 aa)) are heptad repeat 2 (HR2). The stretch at 1055–1083 (PILDIDSEIDRIQGVIQGLNDSLIDLEKL) forms a coiled coil. A helical membrane pass occupies residues 1096-1116 (VWLAIAFATIIFILILGWVFF). Residues 1117-1162 (MTGCCGCCCGCFGIMPLMSKCGKKSSYYTTFDNDVVTEQYRPKKSV) are Cytoplasmic-facing. A Di-lysine motif motif is present at residues 1159–1162 (KKSV).

This sequence belongs to the gammacoronaviruses spike protein family. Homotrimer; each monomer consists of a S1 and a S2 subunit. The resulting peplomers protrude from the virus surface as spikes. Specific enzymatic cleavages in vivo yield mature proteins. The precursor is processed into S1 and S2 by host cell furin or furin-like protease to yield the mature S1 and S2 proteins. The cleavage site between S1 and S2 requires the optimal sequence [KR]-X-[KR]-R. Additionally, a second cleavage leads to the release of a fusion peptide after viral attachment to host cell receptor.

The protein localises to the virion membrane. It localises to the host endoplasmic reticulum-Golgi intermediate compartment membrane. In terms of biological role, attaches the virion to the host cell membrane by interacting with sialic acids, initiating the infection. Its function is as follows. Mediates fusion of the virion and cellular membranes by acting as a class I viral fusion protein. Under the current model, the protein has at least 3 conformational states: pre-fusion native state, pre-hairpin intermediate state, and post-fusion hairpin state. During viral and target cell membrane fusion, the coiled coil regions (heptad repeats) assume a trimer-of-hairpins structure, positioning the fusion peptide in close proximity to the C-terminal region of the ectodomain. The formation of this structure appears to drive apposition and subsequent fusion of viral and target cell membranes. Acts as a viral fusion peptide after S2 cleavage occurring upon virus endocytosis. This Avian infectious bronchitis virus (strain Beaudette) (IBV) protein is Spike glycoprotein.